The chain runs to 46 residues: Iota-conotoxin-like M11.1 (46 aa).

4 disulfides stabilise this stretch: Cys-5–Cys-19, Cys-12–Cys-22, Cys-18–Cys-27, and Cys-21–Cys-38. A D-methionine modification is found at Met-44. Residue Arg-46 is a propeptide, removed by a carboxypeptidase.

This sequence belongs to the conotoxin I1 superfamily. As to expression, expressed by the venom duct.

Its subcellular location is the secreted. Functionally, iota-conotoxins bind to voltage-gated sodium channels (Nav) and act as agonists by shifting the voltage-dependence of activation to more hyperpolarized levels. Produces general excitatory symptoms. This is Iota-conotoxin-like M11.1 from Conus magus (Magical cone).